The chain runs to 201 residues: MDKFTTLTGIAAPMPLVNIDTDMIIPKQFLKTIHRSGLGKNLFDEMRYNPDGSEIPDFVLNQPAYRESQIIVAGDNFGCGSSREHAPWALLDFGIRCVISTSFADIFYNNCFKNGILPIVMPQEVVDVLMEDAKKGANARMTVDLENLTVTTSDGQSFPFELDPFRRHCLLNGLDDIGLTMEKAGAIDTYEAQMAQSRPWV.

Belongs to the LeuD family. LeuD type 1 subfamily. Heterodimer of LeuC and LeuD.

It catalyses the reaction (2R,3S)-3-isopropylmalate = (2S)-2-isopropylmalate. Its pathway is amino-acid biosynthesis; L-leucine biosynthesis; L-leucine from 3-methyl-2-oxobutanoate: step 2/4. In terms of biological role, catalyzes the isomerization between 2-isopropylmalate and 3-isopropylmalate, via the formation of 2-isopropylmaleate. The polypeptide is 3-isopropylmalate dehydratase small subunit (Paracoccus denitrificans (strain Pd 1222)).